A 408-amino-acid chain; its full sequence is Na(+)/H(+) antiporter NhaA 2 (408 aa).

A run of 11 helical transmembrane segments spans residues 36–56 (GILLLICVLVSLIVANTGLGV), 79–99 (ILLWINDGLMAVFFLLVGLEI), 115–135 (ALPVLAAVGGVIIPALIYFLF), 145–165 (GWGIPMATDIAFALGILSLLG), 174–194 (IFLAALAIVDDLIAILVIAVF), 197–217 (SELHFLYLGYAGGIFVLLMVF), 225–245 (LFFYLLPGAVMWYFIHHSGIH), 281–301 (FIIMPVFALANTNIAFESEML), 310–330 (LGIILGLVLGKPIGIFVMSWL), 348–368 (VLGLGLLGGIGFTMSIFIALL), and 381–401 (FAILTASVLAGAAGFILLSSY).

This sequence belongs to the NhaA Na(+)/H(+) (TC 2.A.33) antiporter family.

It localises to the cell inner membrane. The enzyme catalyses Na(+)(in) + 2 H(+)(out) = Na(+)(out) + 2 H(+)(in). Functionally, na(+)/H(+) antiporter that extrudes sodium in exchange for external protons. The sequence is that of Na(+)/H(+) antiporter NhaA 2 from Flavobacterium johnsoniae (strain ATCC 17061 / DSM 2064 / JCM 8514 / BCRC 14874 / CCUG 350202 / NBRC 14942 / NCIMB 11054 / UW101) (Cytophaga johnsonae).